The sequence spans 417 residues: Protein FAM181B (417 aa).

Positions 104–147 are disordered; sequence CSGLMGTAPPRPASPSAADAPAKRPPGAPTVATPAHCKAAPRRE.

Belongs to the FAM181 family.

The sequence is that of Protein FAM181B (Fam181b) from Mus musculus (Mouse).